A 414-amino-acid polypeptide reads, in one-letter code: Na(+)-translocating NADH-quinone reductase subunit B (414 aa).

Transmembrane regions (helical) follow at residues isoleucine 56–glycine 76, phenylalanine 129–methionine 149, and isoleucine 164–threonine 184. Threonine 236 is subject to FMN phosphoryl threonine. 5 helical membrane passes run isoleucine 268–valine 288, isoleucine 297–serine 317, methionine 325–threonine 345, tryptophan 358–tyrosine 378, and glycine 381–isoleucine 401.

This sequence belongs to the NqrB/RnfD family. As to quaternary structure, composed of six subunits; NqrA, NqrB, NqrC, NqrD, NqrE and NqrF. Requires FMN as cofactor.

Its subcellular location is the cell inner membrane. The catalysed reaction is a ubiquinone + n Na(+)(in) + NADH + H(+) = a ubiquinol + n Na(+)(out) + NAD(+). With respect to regulation, this reaction is tightly coupled to the Na(+) pumping activity and specifically requires Na(+) for activity. Inhibited by korormicin and 2-N-heptyl-4-hydroxyquinoline N-oxide (HQNO). Its function is as follows. NQR complex catalyzes the reduction of ubiquinone-1 to ubiquinol by two successive reactions, coupled with the transport of Na(+) ions from the cytoplasm to the periplasm. NqrA to NqrE are probably involved in the second step, the conversion of ubisemiquinone to ubiquinol. This is Na(+)-translocating NADH-quinone reductase subunit B from Vibrio alginolyticus.